We begin with the raw amino-acid sequence, 296 residues long: Acetylglutamate kinase (296 aa).

Substrate is bound by residues 71–72, arginine 93, and asparagine 186; that span reads GG.

It belongs to the acetylglutamate kinase family. ArgB subfamily.

The protein resides in the cytoplasm. The catalysed reaction is N-acetyl-L-glutamate + ATP = N-acetyl-L-glutamyl 5-phosphate + ADP. Its pathway is amino-acid biosynthesis; L-arginine biosynthesis; N(2)-acetyl-L-ornithine from L-glutamate: step 2/4. Functionally, catalyzes the ATP-dependent phosphorylation of N-acetyl-L-glutamate. The sequence is that of Acetylglutamate kinase from Synechococcus sp. (strain RCC307).